The sequence spans 654 residues: Dystrobrevin beta (654 aa).

An N-acetylmethionine modification is found at M1. T11, T69, T179, and T212 each carry phosphothreonine. The ZZ-type zinc-finger motif lies at 238-294; that stretch reads FHPVECSYCHCESMMGFRYRCQQCHNYQLCQNCFWRGHAGGPHSNQHQMKELSSWKS. Residues C243, C246, C258, C261, C267, C270, H280, and H284 each contribute to the Zn(2+) site. A Phosphoserine modification is found at S394. The syntrophin-binding region stretch occupies residues 399-448; that stretch reads DEEHRLIARYAARLAAEAGNMTRPPTDASFNFDANKQQRQLIAELENKNR. T424 carries the phosphothreonine modification. Positions 429 to 519 form a coiled coil; it reads NFDANKQQRQ…LEGLMKLLKA (91 aa). The interval 520-562 is disordered; it reads QATGSPHTSPTHGGGRSMPMPVRSTSAGSTPTHGPQDSLSGVG. 2 stretches are compositionally biased toward polar residues: residues 521–530 and 542–558; these read ATGSPHTSPT and RSTS…QDSL.

This sequence belongs to the dystrophin family. Dystrobrevin subfamily. As to quaternary structure, interacts with dystrophin short form DP71 and syntrophins SNTG1 and SNTG2. Binds DTNBP1. Forms a specific complex composed of DMD, SNTB2 and SNTA1 in neuron; the interaction with SNTB2 and SNTA1 is DMD independent. Interacts with UTRN and dystrophin short form DP71 in the kidney and liver. Interacts with SNTB1, SNTB2 and SNTA1 in kidney and liver. Interacts with KIF5A. Interacts with HMG20A and HMG20B. Interacts with OLFM1. Interacts with PRKAR2B and PRKAR1A. Phosphorylated by PKA. Phosphorylation at Thr-11 alters the interaction with KIF5A. In terms of tissue distribution, expressed in neurons. In the isocortex, expressed most prominently in the somata (including the nuclei) and the dendrites of the pyramidal cells. Expressed in the hippocampus CA1, CA2, and CA3 neurons, namely in the initial segments of dendrites. Expressed in the Purkinje cells, molecular layer interneurons, and granule cells of cerebellum. Expressed in axon fascicles associated with the spinal trigeminal tract and in the internal capsule in the brainstem.

It is found in the cytoplasm. It localises to the postsynaptic density. Its subcellular location is the cell projection. The protein resides in the dendrite. The protein localises to the basal cell membrane. It is found in the postsynapse. It localises to the nucleus. Its function is as follows. Scaffolding protein that assembles DMD and SNTA1 molecules to the basal membrane of kidney cells and liver sinusoids. May function as a repressor of the SYN1 promoter through the binding of repressor element-1 (RE-1), in turn regulates SYN1 expression and may be involved in cell proliferation regulation during the early phase of neural differentiation. May be required for proper maturation and function of a subset of inhibitory synapses. The chain is Dystrobrevin beta from Rattus norvegicus (Rat).